The primary structure comprises 813 residues: Cadherin-22 (813 aa).

A signal peptide spans 1–33 (MRPRPAGALRAGAALSPVLLLLLLLQLLGHLWA). The Extracellular portion of the chain corresponds to 34–621 (ASTPAPSSLS…AFVMAASLSP (588 aa)). 5 Cadherin domains span residues 61–165 (WVWN…EPRF), 166–274 (LHGP…PPRF), 275–391 (PQKM…PPEF), 392–495 (RPPS…NPPE), and 496–613 (LATP…TTAF). Asparagine 159 carries N-linked (GlcNAc...) asparagine glycosylation. N-linked (GlcNAc...) asparagine glycosylation is found at asparagine 463 and asparagine 609. A helical membrane pass occupies residues 622–642 (GALIALLVCVLILVVLALLIL). Residues 643–813 (TLRRHHKSHL…HRGDDEAPAS (171 aa)) lie on the Cytoplasmic side of the membrane. A disordered region spans residues 696 to 726 (GGDPGGGAASPPQAASSSERHSLPRGPSSPE).

Strongly expressed in the pituitary gland and the brain (in the inner granular and glomerular layers of the olfactory bulb, anterior olfactory nucleus, primary olfactory cortex, Purkinje cell layer of cerebellum, and pineal gland). Low expression in lung and heart. No expression in submandibular gland, thymus, liver, spleen, adrenal, and kidney.

The protein resides in the cell membrane. In terms of biological role, cadherins are calcium-dependent cell adhesion proteins. They preferentially interact with themselves in a homophilic manner in connecting cells; cadherins may thus contribute to the sorting of heterogeneous cell types. PB-cadherins may have a role in the morphological organization of pituitary gland and brain tissues. This is Cadherin-22 (Cdh22) from Rattus norvegicus (Rat).